A 132-amino-acid chain; its full sequence is Small ribosomal subunit protein uS8 (132 aa).

Belongs to the universal ribosomal protein uS8 family. In terms of assembly, part of the 30S ribosomal subunit. Contacts proteins S5 and S12.

One of the primary rRNA binding proteins, it binds directly to 16S rRNA central domain where it helps coordinate assembly of the platform of the 30S subunit. The sequence is that of Small ribosomal subunit protein uS8 from Rickettsia typhi (strain ATCC VR-144 / Wilmington).